Reading from the N-terminus, the 334-residue chain is Chitin synthase export chaperone (334 aa).

The next 7 membrane-spanning stretches (helical) occupy residues 49–69 (IIFEGAASVMHIVALIMTVIM), 85–105 (ILSFFYLYMLLTAMSLIIDAG), 123–143 (GLSSAVITCLLINGFVGFQLY), 159–179 (LAAFAISFLVSLATFKSWAGL), 185–205 (VGLFVVLYLLNAVQLFVYVAM), 220–240 (LGDIAFGIFFFVAGQVLLYAF), and 244–264 (ICIAISHYLDGLFLATVCNLL).

It belongs to the CHS7 family.

It localises to the endoplasmic reticulum membrane. Chaperone required for the export of the chitin synthase chs3 from the endoplasmic reticulum. Plays a critical role in cell wall integrity and virulence. The chain is Chitin synthase export chaperone from Fusarium oxysporum f. sp. lycopersici (strain 4287 / CBS 123668 / FGSC 9935 / NRRL 34936) (Fusarium vascular wilt of tomato).